A 247-amino-acid polypeptide reads, in one-letter code: Ubiquinone biosynthesis O-methyltransferase (247 aa).

Positions 41, 72, 93, and 136 each coordinate S-adenosyl-L-methionine.

It belongs to the methyltransferase superfamily. UbiG/COQ3 family.

The catalysed reaction is a 3-demethylubiquinol + S-adenosyl-L-methionine = a ubiquinol + S-adenosyl-L-homocysteine + H(+). It catalyses the reaction a 3-(all-trans-polyprenyl)benzene-1,2-diol + S-adenosyl-L-methionine = a 2-methoxy-6-(all-trans-polyprenyl)phenol + S-adenosyl-L-homocysteine + H(+). Its pathway is cofactor biosynthesis; ubiquinone biosynthesis. Its function is as follows. O-methyltransferase that catalyzes the 2 O-methylation steps in the ubiquinone biosynthetic pathway. The polypeptide is Ubiquinone biosynthesis O-methyltransferase (Bartonella quintana (strain Toulouse) (Rochalimaea quintana)).